The following is a 495-amino-acid chain: Glycogen synthase (495 aa).

Lys-24 serves as a coordination point for ADP-alpha-D-glucose.

Belongs to the glycosyltransferase 1 family. Bacterial/plant glycogen synthase subfamily.

The enzyme catalyses [(1-&gt;4)-alpha-D-glucosyl](n) + ADP-alpha-D-glucose = [(1-&gt;4)-alpha-D-glucosyl](n+1) + ADP + H(+). It participates in glycan biosynthesis; glycogen biosynthesis. Functionally, synthesizes alpha-1,4-glucan chains using ADP-glucose. The protein is Glycogen synthase of Nitrosomonas europaea (strain ATCC 19718 / CIP 103999 / KCTC 2705 / NBRC 14298).